A 349-amino-acid chain; its full sequence is Phosphoribosylformylglycinamidine cyclo-ligase (349 aa).

This sequence belongs to the AIR synthase family.

The protein localises to the cytoplasm. It catalyses the reaction 2-formamido-N(1)-(5-O-phospho-beta-D-ribosyl)acetamidine + ATP = 5-amino-1-(5-phospho-beta-D-ribosyl)imidazole + ADP + phosphate + H(+). The protein operates within purine metabolism; IMP biosynthesis via de novo pathway; 5-amino-1-(5-phospho-D-ribosyl)imidazole from N(2)-formyl-N(1)-(5-phospho-D-ribosyl)glycinamide: step 2/2. In Trichlorobacter lovleyi (strain ATCC BAA-1151 / DSM 17278 / SZ) (Geobacter lovleyi), this protein is Phosphoribosylformylglycinamidine cyclo-ligase.